The chain runs to 242 residues: MRHVAVIIPARYGASRFPGKPLADLAGKPLIAHVVERAQRARGVDVVAVATDDDRIARAARDAGGQAILTGPAATGTDRVAEAARKLAPRPEIVVNLQGDEPLIEPEAIEAVIGAMEAGVRMATLARPLAAGELERTQVVKVVTRASGDALYFSRAPIPHRRAGGESPLARAHVGIYAFTAAFLETFTALAPGRLEGEEALEQLRALEHGYDIRVADTGYRGFGIDTPDDLERARALLAAGA.

The protein belongs to the KdsB family.

It localises to the cytoplasm. The catalysed reaction is 3-deoxy-alpha-D-manno-oct-2-ulosonate + CTP = CMP-3-deoxy-beta-D-manno-octulosonate + diphosphate. Its pathway is nucleotide-sugar biosynthesis; CMP-3-deoxy-D-manno-octulosonate biosynthesis; CMP-3-deoxy-D-manno-octulosonate from 3-deoxy-D-manno-octulosonate and CTP: step 1/1. The protein operates within bacterial outer membrane biogenesis; lipopolysaccharide biosynthesis. Functionally, activates KDO (a required 8-carbon sugar) for incorporation into bacterial lipopolysaccharide in Gram-negative bacteria. This Anaeromyxobacter dehalogenans (strain 2CP-1 / ATCC BAA-258) protein is 3-deoxy-manno-octulosonate cytidylyltransferase.